The chain runs to 115 residues: Large ribosomal subunit protein bL20 (115 aa).

Belongs to the bacterial ribosomal protein bL20 family.

Functionally, binds directly to 23S ribosomal RNA and is necessary for the in vitro assembly process of the 50S ribosomal subunit. It is not involved in the protein synthesizing functions of that subunit. In Methylococcus capsulatus (strain ATCC 33009 / NCIMB 11132 / Bath), this protein is Large ribosomal subunit protein bL20.